Here is a 342-residue protein sequence, read N- to C-terminus: Anthranilate phosphoribosyltransferase (342 aa).

5-phospho-alpha-D-ribose 1-diphosphate is bound by residues Gly84, 87 to 88 (GD), Thr92, 94 to 97 (NIST), 112 to 120 (KHGNRGVSS), and Ser124. An anthranilate-binding site is contributed by Gly84. Ser96 contacts Mg(2+). Position 115 (Asn115) interacts with anthranilate. Residue Arg170 participates in anthranilate binding. Residues Asp229 and Glu230 each coordinate Mg(2+).

It belongs to the anthranilate phosphoribosyltransferase family. In terms of assembly, homodimer. Mg(2+) is required as a cofactor.

It catalyses the reaction N-(5-phospho-beta-D-ribosyl)anthranilate + diphosphate = 5-phospho-alpha-D-ribose 1-diphosphate + anthranilate. The protein operates within amino-acid biosynthesis; L-tryptophan biosynthesis; L-tryptophan from chorismate: step 2/5. Its function is as follows. Catalyzes the transfer of the phosphoribosyl group of 5-phosphorylribose-1-pyrophosphate (PRPP) to anthranilate to yield N-(5'-phosphoribosyl)-anthranilate (PRA). This chain is Anthranilate phosphoribosyltransferase, found in Cupriavidus metallidurans (strain ATCC 43123 / DSM 2839 / NBRC 102507 / CH34) (Ralstonia metallidurans).